Reading from the N-terminus, the 258-residue chain is Undecaprenyl-diphosphatase (258 aa).

8 helical membrane-spanning segments follow: residues 1–21 (MDFL…FLPV), 42–62 (LKCF…FMFF), 69–89 (FNLW…GFLA), 96–116 (FFEP…FIVV), 135–155 (VSFK…IPGT), 173–193 (EVAA…ATAY), 211–231 (IFLV…KLFL), and 237–257 (FSYI…LIYI).

This sequence belongs to the UppP family.

Its subcellular location is the cell inner membrane. The enzyme catalyses di-trans,octa-cis-undecaprenyl diphosphate + H2O = di-trans,octa-cis-undecaprenyl phosphate + phosphate + H(+). Functionally, catalyzes the dephosphorylation of undecaprenyl diphosphate (UPP). Confers resistance to bacitracin. The protein is Undecaprenyl-diphosphatase of Campylobacter fetus subsp. fetus (strain 82-40).